A 663-amino-acid chain; its full sequence is Forkhead protein sep1 (663 aa).

The fork-head DNA-binding region spans Lys128 to Val222. 2 disordered regions span residues Pro220 to Ser241 and Ser325 to Thr387. Over residues Ser340–Ser355 the composition is skewed to low complexity. Ser446 is subject to Phosphoserine.

It is found in the nucleus. In terms of biological role, required for promoter sequence element PCB-driven, M-phase-specific transcription. Acts as a transcriptional activator with a role in the regulation of mitosis. Regulates septation and the periodic transcription of cdc15. This is Forkhead protein sep1 (sep1) from Schizosaccharomyces pombe (strain 972 / ATCC 24843) (Fission yeast).